The chain runs to 201 residues: MDKFNKLTGVAAPLPIINVDTDMIIPKQFLKTIKRTGLGKNLFDEMRYDDNGNEIPDFVLNKPAYRNAQILVTGENFGCGSSREHAPWALLDFGIRCVIAPSFADIFYNNCFQNGILPIVLPQEEVDKLMDDAERGSNAIITVDLEAQEIRGPDGGVIKFDVDPFRKHCMLNGLDGVGLTLQKEAEIATFEKKLEETQPWL.

Belongs to the LeuD family. LeuD type 1 subfamily. As to quaternary structure, heterodimer of LeuC and LeuD.

It carries out the reaction (2R,3S)-3-isopropylmalate = (2S)-2-isopropylmalate. The protein operates within amino-acid biosynthesis; L-leucine biosynthesis; L-leucine from 3-methyl-2-oxobutanoate: step 2/4. In terms of biological role, catalyzes the isomerization between 2-isopropylmalate and 3-isopropylmalate, via the formation of 2-isopropylmaleate. The sequence is that of 3-isopropylmalate dehydratase small subunit from Parvibaculum lavamentivorans (strain DS-1 / DSM 13023 / NCIMB 13966).